A 618-amino-acid chain; its full sequence is Acetolactate synthase (618 aa).

The tract at residues 1 to 30 is disordered; that stretch reads MSAPTKPHSPTFKPEPHSAANEPKHPAARP. Residue E85 coordinates thiamine diphosphate. FAD-binding positions include R187, 293–314, and 336–355; these read HGTV…LGTR and DIDP…IVGD. Residues 429-509 are thiamine pyrophosphate binding; it reads QHQMWAAQFI…VKVALINNGN (81 aa). Mg(2+)-binding residues include D480 and N507.

Belongs to the TPP enzyme family. Mg(2+) is required as a cofactor. It depends on thiamine diphosphate as a cofactor.

It catalyses the reaction 2 pyruvate + H(+) = (2S)-2-acetolactate + CO2. The protein operates within amino-acid biosynthesis; L-isoleucine biosynthesis; L-isoleucine from 2-oxobutanoate: step 1/4. It functions in the pathway amino-acid biosynthesis; L-valine biosynthesis; L-valine from pyruvate: step 1/4. The sequence is that of Acetolactate synthase (ilvB) from Mycobacterium bovis (strain ATCC BAA-935 / AF2122/97).